The sequence spans 128 residues: Large ribosomal subunit protein bL12 (128 aa).

In terms of assembly, homodimer. Part of the 50S ribosomal subunit; present in 6 copies per ribosome. Forms part of the ribosomal stalk which helps the ribosome interact with GTP-bound translation factors. Forms a heptameric L10(L12)2(L12)2(L12)2 complex, where L10 forms an elongated spine to which 3 L12 dimers bind in a sequential fashion.

In terms of biological role, forms part of the ribosomal stalk which helps the ribosome interact with GTP-bound translation factors. Is thus essential for accurate translation. This Thermotoga maritima (strain ATCC 43589 / DSM 3109 / JCM 10099 / NBRC 100826 / MSB8) protein is Large ribosomal subunit protein bL12.